The chain runs to 338 residues: Nicotinate-nucleotide--dimethylbenzimidazole phosphoribosyltransferase (338 aa).

E306 acts as the Proton acceptor in catalysis.

The protein belongs to the CobT family.

It carries out the reaction 5,6-dimethylbenzimidazole + nicotinate beta-D-ribonucleotide = alpha-ribazole 5'-phosphate + nicotinate + H(+). It functions in the pathway nucleoside biosynthesis; alpha-ribazole biosynthesis; alpha-ribazole from 5,6-dimethylbenzimidazole: step 1/2. Functionally, catalyzes the synthesis of alpha-ribazole-5'-phosphate from nicotinate mononucleotide (NAMN) and 5,6-dimethylbenzimidazole (DMB). This chain is Nicotinate-nucleotide--dimethylbenzimidazole phosphoribosyltransferase, found in Cereibacter sphaeroides (strain ATCC 17025 / ATH 2.4.3) (Rhodobacter sphaeroides).